A 1179-amino-acid polypeptide reads, in one-letter code: ATP-dependent helicase/deoxyribonuclease subunit B (1179 aa).

Belongs to the helicase family. AddB/RexB type 2 subfamily. Heterodimer of AddA and RexB. It depends on Mg(2+) as a cofactor.

In terms of biological role, the heterodimer acts as both an ATP-dependent DNA helicase and an ATP-dependent, dual-direction single-stranded exonuclease. Recognizes the chi site generating a DNA molecule suitable for the initiation of homologous recombination. This subunit has 5' -&gt; 3' nuclease activity but not helicase activity. This Lacticaseibacillus paracasei (strain ATCC 334 / BCRC 17002 / CCUG 31169 / CIP 107868 / KCTC 3260 / NRRL B-441) (Lactobacillus paracasei) protein is ATP-dependent helicase/deoxyribonuclease subunit B.